Here is a 34-residue protein sequence, read N- to C-terminus: NU-buthitoxin-Ptr1a (34 aa).

Cystine bridges form between Cys6–Cys27, Cys12–Cys32, and Cys16–Cys34.

As to expression, expressed by the venom gland.

It localises to the secreted. Its function is as follows. Toxin that acts as an agonist on melanocortin receptors (MC1R, MC3R, MC5R, MC5R). After binding to MC1R, the peptide activates the hMC1R/Gs pathway, but after binding to MC4R, it is not able to activate or antagonize the MC4R/Gs pathway. Inhibits melanocyte stimulating hormone (MSH)-binding to human receptors (Ki=2.9 uM to MC1R, Ki=3.9 uM to MC3R, Ki=2.6 uM to MC4R, Ki=2.2 uM to MC5R). This toxin is structurally unrelated to the natural agonists. This Parabuthus transvaalicus (Transvaal thick-tailed scorpion) protein is NU-buthitoxin-Ptr1a.